The sequence spans 761 residues: Elongation factor G, mitochondrial (761 aa).

The transit peptide at 1-33 (MTSVLRGVLKTHLPRTLTLPRCARNFQTTTFLR) directs the protein to the mitochondrion. A tr-type G domain is found at 66–347 (TRLRNIGISA…SVVDYLPQPN (282 aa)). GTP-binding positions include 75 to 82 (AHIDSGKT), 146 to 150 (DTPGH), and 200 to 203 (NKMD).

The protein belongs to the TRAFAC class translation factor GTPase superfamily. Classic translation factor GTPase family. EF-G/EF-2 subfamily.

It localises to the mitochondrion. It functions in the pathway protein biosynthesis; polypeptide chain elongation. Mitochondrial GTPase that catalyzes the GTP-dependent ribosomal translocation step during translation elongation. During this step, the ribosome changes from the pre-translocational (PRE) to the post-translocational (POST) state as the newly formed A-site-bound peptidyl-tRNA and P-site-bound deacylated tRNA move to the P and E sites, respectively. Catalyzes the coordinated movement of the two tRNA molecules, the mRNA and conformational changes in the ribosome. This Candida dubliniensis (strain CD36 / ATCC MYA-646 / CBS 7987 / NCPF 3949 / NRRL Y-17841) (Yeast) protein is Elongation factor G, mitochondrial.